The chain runs to 320 residues: ATP-dependent 6-phosphofructokinase (320 aa).

An ATP-binding site is contributed by G12. Residues 22-26 (RGVVR) and 55-60 (RYSVSD) contribute to the ADP site. ATP contacts are provided by residues 73-74 (RF) and 103-106 (GDGS). Position 104 (D104) interacts with Mg(2+). 126–128 (TID) contacts substrate. Catalysis depends on D128, which acts as the Proton acceptor. R155 contributes to the ADP binding site. Substrate contacts are provided by residues R163 and 170-172 (MGR). ADP-binding positions include 186–188 (GCE), K212, and 214–216 (KKH). Substrate is bound by residues E223, R244, and 250–253 (HIQR).

Belongs to the phosphofructokinase type A (PFKA) family. ATP-dependent PFK group I subfamily. Prokaryotic clade 'B1' sub-subfamily. Homotetramer. It depends on Mg(2+) as a cofactor.

The protein localises to the cytoplasm. It carries out the reaction beta-D-fructose 6-phosphate + ATP = beta-D-fructose 1,6-bisphosphate + ADP + H(+). The protein operates within carbohydrate degradation; glycolysis; D-glyceraldehyde 3-phosphate and glycerone phosphate from D-glucose: step 3/4. Allosterically activated by ADP and other diphosphonucleosides, and allosterically inhibited by phosphoenolpyruvate. Functionally, catalyzes the phosphorylation of D-fructose 6-phosphate to fructose 1,6-bisphosphate by ATP, the first committing step of glycolysis. The chain is ATP-dependent 6-phosphofructokinase from Klebsiella pneumoniae (strain 342).